The chain runs to 329 residues: NADH-quinone oxidoreductase subunit H (329 aa).

8 helical membrane-spanning segments follow: residues 9 to 29 (ILKVLVVVAIFSALAGFLTYV), 79 to 99 (IAPVISAATAFIAMSAVPFFP), 117 to 137 (VGILFVLGVGAVGMYGPLLAG), 162 to 182 (VSGLSILAPLMMVGSLSLIEI), 188 to 208 (GGIFDWLVWSQPLAFLLFLIA), 243 to 263 (FFIGEYANMITLAFLVVLLFF), 269 to 289 (LWFIPGGIAILLKVAVFLFLF), and 309 to 329 (WKVLMPLALLNIVLTGIVLIL).

Belongs to the complex I subunit 1 family. NDH-1 is composed of 14 different subunits. Subunits NuoA, H, J, K, L, M, N constitute the membrane sector of the complex.

The protein localises to the cell inner membrane. The enzyme catalyses a quinone + NADH + 5 H(+)(in) = a quinol + NAD(+) + 4 H(+)(out). NDH-1 shuttles electrons from NADH, via FMN and iron-sulfur (Fe-S) centers, to quinones in the respiratory chain. The immediate electron acceptor for the enzyme in this species is believed to be ubiquinone. Couples the redox reaction to proton translocation (for every two electrons transferred, four hydrogen ions are translocated across the cytoplasmic membrane), and thus conserves the redox energy in a proton gradient. This subunit may bind ubiquinone. The sequence is that of NADH-quinone oxidoreductase subunit H from Wolinella succinogenes (strain ATCC 29543 / DSM 1740 / CCUG 13145 / JCM 31913 / LMG 7466 / NCTC 11488 / FDC 602W) (Vibrio succinogenes).